The chain runs to 176 residues: Insulin-like growth factor 1 (176 aa).

The segment at 45-73 (GPETLCGAELVDTLQFVCGERGFYFSKPT) is b. Intrachain disulfides connect Cys-50–Cys-92, Cys-62–Cys-105, and Cys-91–Cys-96. Positions 74 to 85 (GYGPSSRRSHNR) are c. Positions 86–106 (GIVDECCFQSCELRRLEMYCA) are a. The segment at 107–114 (PVKSGKAA) is d. A propeptide spans 115–176 (RSVRAQRHTD…GNTGGRNYRM (62 aa)) (e peptide). The disordered stretch occupies residues 115-176 (RSVRAQRHTD…GNTGGRNYRM (62 aa)). Basic and acidic residues predominate over residues 140 to 161 (RGTERRTAQHPDKTKPKKEVHQ).

The protein belongs to the insulin family.

Its subcellular location is the secreted. The insulin-like growth factors, isolated from plasma, are structurally and functionally related to insulin but have a much higher growth-promoting activity. Acts as a ligand for IGF1R. Binds to the alpha subunit of IGF1R, leading to the activation of the intrinsic tyrosine kinase activity which autophosphorylates tyrosine residues in the beta subunit thus initiatiating a cascade of down-stream signaling events leading to activation of the PI3K-AKT/PKB and the Ras-MAPK pathways. Binds to integrins. Its binding to integrins and subsequent ternary complex formation with integrins and IGFR1 are essential for IGF1 signaling. The protein is Insulin-like growth factor 1 of Oncorhynchus mykiss (Rainbow trout).